The chain runs to 311 residues: tRNA dimethylallyltransferase (311 aa).

13 to 20 contacts ATP; the sequence is GPTASGKT. 15–20 is a binding site for substrate; sequence TASGKT. 2 interaction with substrate tRNA regions span residues 38–41 and 166–170; these read DSMQ and QRVLR.

The protein belongs to the IPP transferase family. As to quaternary structure, monomer. Requires Mg(2+) as cofactor.

It carries out the reaction adenosine(37) in tRNA + dimethylallyl diphosphate = N(6)-dimethylallyladenosine(37) in tRNA + diphosphate. Its function is as follows. Catalyzes the transfer of a dimethylallyl group onto the adenine at position 37 in tRNAs that read codons beginning with uridine, leading to the formation of N6-(dimethylallyl)adenosine (i(6)A). This chain is tRNA dimethylallyltransferase, found in Staphylococcus aureus (strain bovine RF122 / ET3-1).